The sequence spans 544 residues: Spore germination protein KA (544 aa).

Residues 1 to 36 are disordered; the sequence is MPLFSKRKNNTDSKDKQNTDERNQEQQQEKERPVLI. Over residues 9–33 the composition is skewed to basic and acidic residues; the sequence is NNTDSKDKQNTDERNQEQQQEKERP. Helical transmembrane passes span 279 to 299, 321 to 341, 392 to 412, 416 to 436, and 443 to 463; these read FAII…FVQF, VLVF…TTFH, AVSI…GIVS, VIIV…AMAI, and FIFI…GIIM. Residues 504–523 are compositionally biased toward basic and acidic residues; it reads KRPESVSKEDKVRQGKDQRP. The interval 504–544 is disordered; sequence KRPESVSKEDKVRQGKDQRPEPAASRGMVNKDLEEGDQNGT.

This sequence belongs to the GerABKA family.

The protein localises to the cell membrane. Its function is as follows. Involved in the germination response to the combination of glucose, fructose, L-asparagine, and KCl. The protein is Spore germination protein KA (gerKA) of Bacillus subtilis (strain 168).